The following is a 312-amino-acid chain: DNA-directed RNA polymerase subunit alpha (312 aa).

The interval 1 to 226 (MIEFEKPKIT…DHLNLFVDLS (226 aa)) is alpha N-terminal domain (alpha-NTD). The interval 243–312 (TERVLDKIIE…ELGLSLKKRK (70 aa)) is alpha C-terminal domain (alpha-CTD).

Belongs to the RNA polymerase alpha chain family. As to quaternary structure, homodimer. The RNAP catalytic core consists of 2 alpha, 1 beta, 1 beta' and 1 omega subunit. When a sigma factor is associated with the core the holoenzyme is formed, which can initiate transcription.

The enzyme catalyses RNA(n) + a ribonucleoside 5'-triphosphate = RNA(n+1) + diphosphate. Its function is as follows. DNA-dependent RNA polymerase catalyzes the transcription of DNA into RNA using the four ribonucleoside triphosphates as substrates. The chain is DNA-directed RNA polymerase subunit alpha from Lactococcus lactis subsp. cremoris (strain SK11).